Consider the following 134-residue polypeptide: FK506-binding protein 2 (134 aa).

The signal sequence occupies residues 1–19 (MRILLLSALFLSLTTLVLS). A PPIase FKBP-type domain is found at 39–127 (GDTVHMHYRG…IFETELVQIE (89 aa)). The Prevents secretion from ER signature appears at 131 to 134 (NDEL).

This sequence belongs to the FKBP-type PPIase family. FKBP2 subfamily.

Its subcellular location is the endoplasmic reticulum. The catalysed reaction is [protein]-peptidylproline (omega=180) = [protein]-peptidylproline (omega=0). With respect to regulation, inhibited by both FK506 and rapamycin. Its function is as follows. PPIases accelerate the folding of proteins. It catalyzes the cis-trans isomerization of proline imidic peptide bonds in oligopeptides. This Aspergillus fumigatus (strain ATCC MYA-4609 / CBS 101355 / FGSC A1100 / Af293) (Neosartorya fumigata) protein is FK506-binding protein 2 (fpr2).